We begin with the raw amino-acid sequence, 399 residues long: MENRDSVASLLLLLLLLPPPHTHQGQVLRHVVPTQNSQDSPARYLSNGPGQEPVAVMTIDLTQMSKPYSSFEFRTLDPEGVIFYGDTNTKDDWFMLGLRDGQLEIQMHNPWAQLTVGFGPRLNDGRWHQVELKMSGDSLQLWVDGKELLCLRQISGTLANNSWPSMRIALGGLLLPTSSLRFPLVPALDGCLRRDTWLGHQVHLSPSAPNLGNCDVDLQPGLFFPQGTHAEFSLQDIPQPRTDPWSFSLELGLKLVDGSGCLLALGTRTNSSWLSLHLQDQKVVLSSGVEPKLVLALDMGLPLQLKLDILKVVLSQGPKTEVLGASASRLAALRTLWSHPQGLLSLGALAGDNSSASFCLSDLWVQGQRLDIDQALNRSQNIWTHSCPHSPNNVSHISH.

The N-terminal stretch at 1 to 29 is a signal peptide; that stretch reads MENRDSVASLLLLLLLLPPPHTHQGQVLR. Laminin G-like domains follow at residues 43–214 and 221–387; these read RYLS…LGNC and GLFF…THSC. N-linked (GlcNAc...) asparagine glycosylation occurs at asparagine 160. Cysteine 191 and cysteine 214 form a disulfide bridge. Asparagine 270, asparagine 353, asparagine 377, and asparagine 393 each carry an N-linked (GlcNAc...) asparagine glycan. A disulfide bridge connects residues cysteine 359 and cysteine 387.

As to quaternary structure, homodimer. Differentially glycosylated in liver (SHBG) and testis (ABP).

Its subcellular location is the secreted. In terms of biological role, functions as an androgen transport protein, but may also be involved in receptor mediated processes. Each dimer binds one molecule of steroid. Specific for 5-alpha-dihydrotestosterone, testosterone, and 17-beta-estradiol. Regulates the plasma metabolic clearance rate of steroid hormones by controlling their plasma concentration. The polypeptide is Sex hormone-binding globulin (SHBG) (Phodopus sungorus (Striped hairy-footed hamster)).